The sequence spans 301 residues: Syntaxin-17 (301 aa).

N-acetylserine is present on S2. Residues 2-227 (SEDEEKVKLR…KNLQKAAKYK (226 aa)) are Cytoplasmic-facing. K41 carries the post-translational modification N6-acetyllysine. A coiled-coil region spans residues 49–128 (DKLHEEHINA…QVKNEEALLQ (80 aa)). Residue Y156 is modified to Phosphotyrosine; by ABL1. The t-SNARE coiled-coil homology domain maps to 161–223 (IPRDQNAAES…EEGTKNLQKA (63 aa)). The helical transmembrane segment at 228-248 (LAALPVAGAVIGGVVGGPIGL) threads the bilayer. The segment at 228-274 (LAALPVAGAVIGGVVGGPIGLLAGFKVAGIAAALGGGVLGFTGGKLI) is necessary and sufficient for localization to autophagosome. The Lumenal portion of the chain corresponds to 249–253 (LAGFK). A helical transmembrane segment spans residues 254-274 (VAGIAAALGGGVLGFTGGKLI). Residues 273-301 (LIQRRKQKMMEKLTSSCPDLPSQSDKKCS) are required for interaction with COPB1, TMED9 and TMED10. The Cytoplasmic portion of the chain corresponds to 275 to 301 (QRRKQKMMEKLTSSCPDLPSQSDKKCS). S288 carries the post-translational modification Phosphoserine. The Endoplasmic reticulum retention signal motif lies at 298 to 301 (KKCS).

This sequence belongs to the syntaxin family. As to quaternary structure, forms a SNARE complex composed of VAMP8, SNAP29 and STX17 involved in fusion of autophagosome with lysosome. May interact with VAMP7. May interact with VTI1B. Probably interacts with BET1, SCFD1 and SEC22B. Interacts with PTPN2 and ABL1; involved in STX17 phosphorylation. Interacts with COPB1. Interacts with TMED9 and TMED10; the interaction is direct. Interacts with RUBCNL/PACER; promoting targeting of RUBCNL/PACER to autophagosome. Interacts with VAMP8, SNAP29, VPS39 and VPS41; these interactions are increased in the absence of TMEM39A. Interacts with IRGM; promoting STX17 recruitment to autophagosomes. Interacts with ATG8 proteins GABARAP and MAP1LC3B. Interacts with RNF115; this interaction enhances STX17 stability which in turn promotes autophagosome maturation. Interacts with RAB39A (GTP-bound); the interaction promotes autophagosome-lysosome membrane fusion driven by STX17-SNAP29-VAMP8. Interacts with RAB39B; the interaction may promote a different fonction in autophagy as compared with RAB39A. In terms of processing, phosphorylated at Tyr-156 probably by ABL1. Dephosphorylation by PTPN2; regulates exit from the endoplasmic reticulum. In terms of tissue distribution, detected in all tissues examined with higher expression in steroidogenic tissues including testis and adrenal gland (at protein level). Highly expressed in liver and testis. Also found in brain, heart, kidney, lung, placenta, skeletal muscle and spleen.

Its subcellular location is the endoplasmic reticulum membrane. The protein resides in the smooth endoplasmic reticulum membrane. It is found in the endoplasmic reticulum-Golgi intermediate compartment membrane. It localises to the cytoplasmic vesicle. The protein localises to the autophagosome membrane. Its subcellular location is the COPII-coated vesicle membrane. The protein resides in the cytoplasm. It is found in the cytosol. It localises to the mitochondrion membrane. The protein localises to the autolysosome membrane. Its function is as follows. SNAREs, soluble N-ethylmaleimide-sensitive factor-attachment protein receptors, are essential proteins for fusion of cellular membranes. SNAREs localized on opposing membranes assemble to form a trans-SNARE complex, an extended, parallel four alpha-helical bundle that drives membrane fusion. STX17 is a SNARE of the autophagosome involved in autophagy through the direct control of autophagosome membrane fusion with the lysosome membrane. May also play a role in the early secretory pathway where it may maintain the architecture of the endoplasmic reticulum-Golgi intermediate compartment/ERGIC and Golgi and/or regulate transport between the endoplasmic reticulum, the ERGIC and the Golgi. This Rattus norvegicus (Rat) protein is Syntaxin-17.